Consider the following 631-residue polypeptide: Phosphomethylpyrimidine synthase (631 aa).

Substrate-binding positions include Asn-239, Met-268, Tyr-297, His-333, 353-355, 394-397, and Glu-433; these read SRG and DGLR. His-437 is a Zn(2+) binding site. Residue Tyr-460 coordinates substrate. Position 501 (His-501) interacts with Zn(2+). 3 residues coordinate [4Fe-4S] cluster: Cys-581, Cys-584, and Cys-589.

Belongs to the ThiC family. Homodimer. The cofactor is [4Fe-4S] cluster.

The catalysed reaction is 5-amino-1-(5-phospho-beta-D-ribosyl)imidazole + S-adenosyl-L-methionine = 4-amino-2-methyl-5-(phosphooxymethyl)pyrimidine + CO + 5'-deoxyadenosine + formate + L-methionine + 3 H(+). The protein operates within cofactor biosynthesis; thiamine diphosphate biosynthesis. Functionally, catalyzes the synthesis of the hydroxymethylpyrimidine phosphate (HMP-P) moiety of thiamine from aminoimidazole ribotide (AIR) in a radical S-adenosyl-L-methionine (SAM)-dependent reaction. The protein is Phosphomethylpyrimidine synthase of Escherichia coli O8 (strain IAI1).